A 32-amino-acid polypeptide reads, in one-letter code: Tail virion protein G7P (32 aa).

A helical transmembrane segment spans residues leucine 9–glycine 29.

Belongs to the inovirus G7P protein family.

Its subcellular location is the virion. The protein resides in the host membrane. May initiate with G9P the virion concomitant assembly-budding process, by interacting with the packaging signal of the viral genome. The assembly-budding takes place at the host inner membrane. In turn, G7P and G9P are present at the end of the filamentous virion that emerges first from the bacterial host. The protein is Tail virion protein G7P (VII) of Escherichia phage If1 (Bacteriophage If1).